The following is a 119-amino-acid chain: Large ribosomal subunit protein uL18 (119 aa).

It belongs to the universal ribosomal protein uL18 family. As to quaternary structure, part of the 50S ribosomal subunit; part of the 5S rRNA/L5/L18/L25 subcomplex. Contacts the 5S and 23S rRNAs.

Functionally, this is one of the proteins that bind and probably mediate the attachment of the 5S RNA into the large ribosomal subunit, where it forms part of the central protuberance. The chain is Large ribosomal subunit protein uL18 from Cupriavidus taiwanensis (strain DSM 17343 / BCRC 17206 / CCUG 44338 / CIP 107171 / LMG 19424 / R1) (Ralstonia taiwanensis (strain LMG 19424)).